We begin with the raw amino-acid sequence, 283 residues long: MFS-type transporter eupM (283 aa).

The next 7 membrane-spanning stretches (helical) occupy residues 68-88 (LVAW…WGAM), 111-131 (IAWI…VAGP), 136-156 (GGFK…YMML), 165-185 (VLLA…TPMI), 196-216 (IGLA…VYPI), 227-247 (FAWT…IPII), and 263-283 (LIDL…ATMI).

This sequence belongs to the major facilitator superfamily. Monocarboxylate porter (TC 2.A.1.13) family.

The protein resides in the membrane. In terms of biological role, MFS-type transporter; part of the gene cluster that mediates the biosynthesis of eupenifeldin, a bistropolone meroterpenoid that acts as an antitumor agent. The protein is MFS-type transporter eupM of Phoma sp.